Consider the following 150-residue polypeptide: Placenta-specific protein 4 (150 aa).

Expressed in placental syncytiotrophoblast and choriocarcinoma cells.

This Homo sapiens (Human) protein is Placenta-specific protein 4 (PLAC4).